The chain runs to 128 residues: Gastrotropin (128 aa).

Ala2 carries the post-translational modification N-acetylalanine.

Belongs to the calycin superfamily. Fatty-acid binding protein (FABP) family.

Its subcellular location is the cytoplasm. It localises to the membrane. In terms of biological role, binds to bile acids and is involved in enterohepatic bile acid metabolism. Required for efficient apical to basolateral transport of conjugated bile acids in ileal enterocytes. Stimulates gastric acid and pepsinogen secretion. This is Gastrotropin (FABP6) from Bos taurus (Bovine).